The following is a 370-amino-acid chain: UDP-N-acetylglucosamine--N-acetylmuramyl-(pentapeptide) pyrophosphoryl-undecaprenol N-acetylglucosamine transferase (370 aa).

Residues 10 to 12 (TGG), Asn-126, Ser-200, Ile-255, and Gln-300 contribute to the UDP-N-acetyl-alpha-D-glucosamine site.

Belongs to the glycosyltransferase 28 family. MurG subfamily.

Its subcellular location is the cell membrane. The catalysed reaction is Mur2Ac(oyl-L-Ala-gamma-D-Glu-L-Lys-D-Ala-D-Ala)-di-trans,octa-cis-undecaprenyl diphosphate + UDP-N-acetyl-alpha-D-glucosamine = beta-D-GlcNAc-(1-&gt;4)-Mur2Ac(oyl-L-Ala-gamma-D-Glu-L-Lys-D-Ala-D-Ala)-di-trans,octa-cis-undecaprenyl diphosphate + UDP + H(+). Its pathway is cell wall biogenesis; peptidoglycan biosynthesis. In terms of biological role, cell wall formation. Catalyzes the transfer of a GlcNAc subunit on undecaprenyl-pyrophosphoryl-MurNAc-pentapeptide (lipid intermediate I) to form undecaprenyl-pyrophosphoryl-MurNAc-(pentapeptide)GlcNAc (lipid intermediate II). The polypeptide is UDP-N-acetylglucosamine--N-acetylmuramyl-(pentapeptide) pyrophosphoryl-undecaprenol N-acetylglucosamine transferase (Lactobacillus gasseri (strain ATCC 33323 / DSM 20243 / BCRC 14619 / CIP 102991 / JCM 1131 / KCTC 3163 / NCIMB 11718 / NCTC 13722 / AM63)).